A 175-amino-acid polypeptide reads, in one-letter code: Bcl-2-related protein A1 (175 aa).

The BH1 signature appears at 77 to 97; that stretch reads KEFEDGIINWGRIVTIFAFEG. The short motif at 132-147 is the BH2 element; that stretch reads EWIRQNGGWENGFVKK.

The protein belongs to the Bcl-2 family. As to quaternary structure, interacts directly with BAK1, BID, BMF and BBC3. Interacts directly with BCL2L11/BIM. Interacts with BAX isoform Sigma. Interacts directly with PMAIP1. Interacts with RTL10/BOP. Interacts with ING4. Interacts with UBQLN4. As to expression, seems to be restricted to the hematopoietic compartment. Expressed in peripheral blood, spleen, and bone marrow, at moderate levels in lung, small intestine and testis, at a minimal levels in other tissues. Also found in vascular smooth muscle cells and hematopoietic malignancies.

Its subcellular location is the cytoplasm. Retards apoptosis induced by IL-3 deprivation. May function in the response of hemopoietic cells to external signals and in maintaining endothelial survival during infection. Can inhibit apoptosis induced by serum starvation in the mammary epithelial cell line HC11. In Homo sapiens (Human), this protein is Bcl-2-related protein A1 (BCL2A1).